The chain runs to 136 residues: HTH-type transcriptional regulator LrpA (136 aa).

One can recognise an HTH asnC-type domain in the interval 2–63 (IDEIDKKILD…EVNQVKLGFS (62 aa)). Residues 21–40 (MKKLGEKVHLTAPATASRVV) constitute a DNA-binding region (H-T-H motif).

Negative regulation of glyA transcription and kinB-dependent sporulation. In Bacillus subtilis (strain 168), this protein is HTH-type transcriptional regulator LrpA (lrpA).